A 188-amino-acid polypeptide reads, in one-letter code: NAD(P)H-quinone oxidoreductase subunit 6, chloroplastic (188 aa).

5 helical membrane passes run 10–30 (GILLIIELGILLGSMGVILLN), 32–52 (IVQSAFSLGLTFISISLLYLV), 61–81 (AQVLIYVGAINVLIVFSVMLI), 97–117 (GNNITLIVCTSLFLFLVSIIL), and 153–173 (FLLPFELLSVLLLVALVGAIT).

The protein belongs to the complex I subunit 6 family. In terms of assembly, NDH is composed of at least 16 different subunits, 5 of which are encoded in the nucleus.

Its subcellular location is the plastid. It is found in the chloroplast thylakoid membrane. The catalysed reaction is a plastoquinone + NADH + (n+1) H(+)(in) = a plastoquinol + NAD(+) + n H(+)(out). It catalyses the reaction a plastoquinone + NADPH + (n+1) H(+)(in) = a plastoquinol + NADP(+) + n H(+)(out). NDH shuttles electrons from NAD(P)H:plastoquinone, via FMN and iron-sulfur (Fe-S) centers, to quinones in the photosynthetic chain and possibly in a chloroplast respiratory chain. The immediate electron acceptor for the enzyme in this species is believed to be plastoquinone. Couples the redox reaction to proton translocation, and thus conserves the redox energy in a proton gradient. This is NAD(P)H-quinone oxidoreductase subunit 6, chloroplastic (ndhG) from Psilotum nudum (Whisk fern).